A 524-amino-acid chain; its full sequence is 2-isopropylmalate synthase (524 aa).

Residues 15–277 (VVIFDTTMRD…ETKIDTTHIT (263 aa)) form the Pyruvate carboxyltransferase domain. Mn(2+)-binding residues include Asp-24, His-212, His-214, and Asn-248. Residues 401-524 (RVQRLRVVAG…RPEAAIASGF (124 aa)) form a regulatory domain region.

Belongs to the alpha-IPM synthase/homocitrate synthase family. LeuA type 1 subfamily. As to quaternary structure, homodimer. Mn(2+) is required as a cofactor.

Its subcellular location is the cytoplasm. The catalysed reaction is 3-methyl-2-oxobutanoate + acetyl-CoA + H2O = (2S)-2-isopropylmalate + CoA + H(+). Its pathway is amino-acid biosynthesis; L-leucine biosynthesis; L-leucine from 3-methyl-2-oxobutanoate: step 1/4. Its function is as follows. Catalyzes the condensation of the acetyl group of acetyl-CoA with 3-methyl-2-oxobutanoate (2-ketoisovalerate) to form 3-carboxy-3-hydroxy-4-methylpentanoate (2-isopropylmalate). The chain is 2-isopropylmalate synthase from Caulobacter sp. (strain K31).